A 146-amino-acid chain; its full sequence is Cyanate hydratase (146 aa).

Catalysis depends on residues R87, E90, and S113.

The protein belongs to the cyanase family.

The enzyme catalyses cyanate + hydrogencarbonate + 3 H(+) = NH4(+) + 2 CO2. Its function is as follows. Catalyzes the reaction of cyanate with bicarbonate to produce ammonia and carbon dioxide. This chain is Cyanate hydratase, found in Pseudomonas putida (strain ATCC 700007 / DSM 6899 / JCM 31910 / BCRC 17059 / LMG 24140 / F1).